We begin with the raw amino-acid sequence, 726 residues long: Dipeptidyl-peptidase 5 (726 aa).

Positions 1-19 (MAPAKWLIASLAFASTGLA) are cleaved as a signal peptide. 2 N-linked (GlcNAc...) asparagine glycosylation sites follow: Asn-96 and Asn-252. The segment at 268 to 292 (VAEPINKRNGPRTPHGIEGASSSPV) is disordered. An N-linked (GlcNAc...) asparagine glycan is attached at Asn-485. Ser-558 (charge relay system) is an active-site residue. Residue Asn-605 is glycosylated (N-linked (GlcNAc...) asparagine). Catalysis depends on charge relay system residues Asp-641 and His-673. An N-linked (GlcNAc...) asparagine glycan is attached at Asn-699.

Belongs to the peptidase S9C family.

It localises to the secreted. In terms of biological role, extracellular dipeptidyl-peptidase which removes N-terminal dipeptides sequentially from polypeptides having unsubstituted N-termini. Contributes to pathogenicity. The protein is Dipeptidyl-peptidase 5 (DPP5) of Arthroderma otae (strain ATCC MYA-4605 / CBS 113480) (Microsporum canis).